A 90-amino-acid polypeptide reads, in one-letter code: MNLIDRQQALALGRGLRLDWEPRKACHVLLYAGGIIELNASAGWVLELLDGHSTVATVIDRLAQRFPNVPGLEEDVLAFLEVARAKSWIE.

Belongs to the PqqD family. As to quaternary structure, monomer. Interacts with PqqE.

It participates in cofactor biosynthesis; pyrroloquinoline quinone biosynthesis. In terms of biological role, functions as a PqqA binding protein and presents PqqA to PqqE, in the pyrroloquinoline quinone (PQQ) biosynthetic pathway. The protein is PqqA binding protein 2 (pqqD2) of Pseudomonas putida (strain ATCC 47054 / DSM 6125 / CFBP 8728 / NCIMB 11950 / KT2440).